We begin with the raw amino-acid sequence, 516 residues long: Flavin-dependent halogenase armH2 (516 aa).

3 residues coordinate FAD: glycine 16, alanine 19, and glutamate 49. Serine 328 and glycine 329 together coordinate chloride. Isoleucine 330 is a binding site for FAD. Residues proline 440 to glutamate 475 form a disordered region.

This sequence belongs to the flavin-dependent halogenase family.

It carries out the reaction melleolide F + FADH2 + chloride + O2 = 6'-chloromelleolide F + FAD + 2 H2O + H(+). In terms of biological role, flavin-dependent halogenase involved in the biosynthesis of melleolides, a range of antifungal and phytotoxic polyketide derivatives composed of an orsellinic acid (OA) moiety esterified to various sesquiterpene alcohols. The halogenase catalyzes the transfer of a single chlorine atom to the melleolide backbone, resulting in a 6'-chloromelleolide product. The enzyme acts on free substrate and does not depend on carrier-protein-dependent acceptor molecules. The sequence is that of Flavin-dependent halogenase armH2 from Armillaria mellea (Honey mushroom).